Reading from the N-terminus, the 533-residue chain is Calcineurin-interacting protein 3 (533 aa).

Disordered regions lie at residues 1-30, 53-85, and 359-404; these read MRSLKRENSGSALSVRSSDSEGDSYHNMDI, PRKQRSCHKRAEPVSEEHRKKESSKNSREYTKR, and MDMS…LTLP. Over residues 61 to 85 the composition is skewed to basic and acidic residues; the sequence is KRAEPVSEEHRKKESSKNSREYTKR. Positions 359 to 372 are enriched in polar residues; the sequence is MDMSQTLSPEQTLS. Positions 373–384 are enriched in basic and acidic residues; sequence PREKLQVQDRKI.

It is found in the nucleus. This is Calcineurin-interacting protein 3 from Caenorhabditis elegans.